A 280-amino-acid polypeptide reads, in one-letter code: Phosphatidylglycerol--prolipoprotein diacylglyceryl transferase (280 aa).

3 helical membrane passes run 15 to 35 (IFSI…IFAL), 60 to 80 (FIGL…PVFF), and 90 to 110 (IWEG…VLLF). Arg-138 is an a 1,2-diacyl-sn-glycero-3-phospho-(1'-sn-glycerol) binding site. Transmembrane regions (helical) follow at residues 217–237 (MPFG…RIFL) and 257–277 (GQLL…NIYV).

This sequence belongs to the Lgt family.

The protein resides in the cell membrane. The catalysed reaction is L-cysteinyl-[prolipoprotein] + a 1,2-diacyl-sn-glycero-3-phospho-(1'-sn-glycerol) = an S-1,2-diacyl-sn-glyceryl-L-cysteinyl-[prolipoprotein] + sn-glycerol 1-phosphate + H(+). Its pathway is protein modification; lipoprotein biosynthesis (diacylglyceryl transfer). In terms of biological role, catalyzes the transfer of the diacylglyceryl group from phosphatidylglycerol to the sulfhydryl group of the N-terminal cysteine of a prolipoprotein, the first step in the formation of mature lipoproteins. This Buchnera aphidicola subsp. Baizongia pistaciae (strain Bp) protein is Phosphatidylglycerol--prolipoprotein diacylglyceryl transferase.